Consider the following 196-residue polypeptide: Carnitine operon protein CaiE (196 aa).

Residues 173–196 are disordered; the sequence is TQPLRQMEENRPRLQGTTDVTPKR. Over residues 187–196 the composition is skewed to polar residues; sequence QGTTDVTPKR.

Belongs to the transferase hexapeptide repeat family.

It participates in amine and polyamine metabolism; carnitine metabolism. Overproduction of CaiE stimulates the activity of CaiB and CaiD. This Shigella flexneri serotype 5b (strain 8401) protein is Carnitine operon protein CaiE.